A 356-amino-acid polypeptide reads, in one-letter code: Glutamine synthetase (356 aa).

In terms of domain architecture, GS beta-grasp spans 19-99; it reads VIAEYIWIGG…VICDTYTPAG (81 aa). The 251-residue stretch at 106 to 356 folds into the GS catalytic domain; it reads KRHGAAKIFS…IAETTLLWKP (251 aa).

Belongs to the glutamine synthetase family. Homooctamer. As to expression, found at highest levels in root nodules.

The protein localises to the cytoplasm. The enzyme catalyses L-glutamate + NH4(+) + ATP = L-glutamine + ADP + phosphate + H(+). The chain is Glutamine synthetase (GLN1) from Alnus glutinosa (European alder).